The sequence spans 424 residues: Probable serine/threonine-protein kinase PBL6 (424 aa).

Positions 1–26 (MGCFGRTPKSNKRSDTKTTKNNDFTP) are disordered. Gly-2 carries N-myristoyl glycine lipidation. Residue Cys-3 is the site of S-palmitoyl cysteine attachment. Thr-87 carries the phosphothreonine modification. In terms of domain architecture, Protein kinase spans 98-377 (FKSDCFLGEG…VVMALDHLAS (280 aa)). Residues 104 to 112 (LGEGGFGKV) and Lys-127 contribute to the ATP site. Phosphotyrosine is present on Tyr-172. The active-site Proton acceptor is the Asp-225. 2 positions are modified to phosphoserine: Ser-229 and Ser-259. 2 positions are modified to phosphothreonine: Thr-260 and Thr-265. Position 273 is a phosphotyrosine (Tyr-273).

This sequence belongs to the protein kinase superfamily. Ser/Thr protein kinase family.

The protein resides in the cell membrane. The enzyme catalyses L-seryl-[protein] + ATP = O-phospho-L-seryl-[protein] + ADP + H(+). It catalyses the reaction L-threonyl-[protein] + ATP = O-phospho-L-threonyl-[protein] + ADP + H(+). May be involved in plant defense signaling. The chain is Probable serine/threonine-protein kinase PBL6 from Arabidopsis thaliana (Mouse-ear cress).